Consider the following 234-residue polypeptide: Carboxy-S-adenosyl-L-methionine synthase (234 aa).

S-adenosyl-L-methionine-binding positions include Y35, 60 to 62, 109 to 110, N124, and R191; these read GCS and DV.

This sequence belongs to the class I-like SAM-binding methyltransferase superfamily. Cx-SAM synthase family. Homodimer.

The catalysed reaction is prephenate + S-adenosyl-L-methionine = carboxy-S-adenosyl-L-methionine + 3-phenylpyruvate + H2O. In terms of biological role, catalyzes the conversion of S-adenosyl-L-methionine (SAM) to carboxy-S-adenosyl-L-methionine (Cx-SAM). The chain is Carboxy-S-adenosyl-L-methionine synthase from Campylobacter curvus (strain 525.92).